Consider the following 235-residue polypeptide: Carbohydrate deacetylase (235 aa).

Mg(2+) is bound by residues His-61 and His-124.

This sequence belongs to the YdjC deacetylase family. It depends on Mg(2+) as a cofactor.

Functionally, probably catalyzes the deacetylation of acetylated carbohydrates an important step in the degradation of oligosaccharides. The polypeptide is Carbohydrate deacetylase (Bacillus cereus (strain 03BB102)).